A 218-amino-acid chain; its full sequence is Large ribosomal subunit protein uL3 (218 aa).

Disordered regions lie at residues 128–167 (FSRG…RMGG) and 199–218 (SLLN…QGGK).

The protein belongs to the universal ribosomal protein uL3 family. As to quaternary structure, part of the 50S ribosomal subunit. Forms a cluster with proteins L14 and L19.

In terms of biological role, one of the primary rRNA binding proteins, it binds directly near the 3'-end of the 23S rRNA, where it nucleates assembly of the 50S subunit. In Prochlorococcus marinus (strain NATL2A), this protein is Large ribosomal subunit protein uL3.